Here is a 170-residue protein sequence, read N- to C-terminus: Probable deoxyuridine 5'-triphosphate nucleotidohydrolase (170 aa).

It belongs to the dCTP deaminase family. Archaeal dUTPase subfamily.

The catalysed reaction is dUTP + H2O = dUMP + diphosphate + H(+). It functions in the pathway pyrimidine metabolism; dUMP biosynthesis; dUMP from dCTP (dUTP route): step 2/2. Its function is as follows. This enzyme is involved in nucleotide metabolism: it produces dUMP, the immediate precursor of thymidine nucleotides and it decreases the intracellular concentration of dUTP so that uracil cannot be incorporated into DNA. The chain is Probable deoxyuridine 5'-triphosphate nucleotidohydrolase from Methanococcoides burtonii (strain DSM 6242 / NBRC 107633 / OCM 468 / ACE-M).